We begin with the raw amino-acid sequence, 64 residues long: MAGGVKGIGKFFGDVVAEMKRVSWPTRKELTRYTLVVLGTVAFITVFFAVVDYGISALVRGLIE.

Residues 35 to 55 (LVVLGTVAFITVFFAVVDYGI) traverse the membrane as a helical segment.

This sequence belongs to the SecE/SEC61-gamma family. Component of the Sec protein translocase complex. Heterotrimer consisting of SecY, SecE and SecG subunits. The heterotrimers can form oligomers, although 1 heterotrimer is thought to be able to translocate proteins. Interacts with the ribosome. Interacts with SecDF, and other proteins may be involved. Interacts with SecA.

Its subcellular location is the cell membrane. Its function is as follows. Essential subunit of the Sec protein translocation channel SecYEG. Clamps together the 2 halves of SecY. May contact the channel plug during translocation. The sequence is that of Protein translocase subunit SecE from Halalkalibacterium halodurans (strain ATCC BAA-125 / DSM 18197 / FERM 7344 / JCM 9153 / C-125) (Bacillus halodurans).